The following is a 107-amino-acid chain: Putative double-stranded DNA mimic protein Asuc_1259 (107 aa).

It belongs to the putative dsDNA mimic protein family.

May act as a double-stranded DNA (dsDNA) mimic. Probably regulates the activity of a dsDNA-binding protein. In Actinobacillus succinogenes (strain ATCC 55618 / DSM 22257 / CCUG 43843 / 130Z), this protein is Putative double-stranded DNA mimic protein Asuc_1259.